A 119-amino-acid chain; its full sequence is Large ribosomal subunit protein uL14 (119 aa).

This sequence belongs to the universal ribosomal protein uL14 family. As to quaternary structure, part of the 50S ribosomal subunit. Forms a cluster with proteins L3 and L19. In the 70S ribosome, L14 and L19 interact and together make contacts with the 16S rRNA in bridges B5 and B8.

Functionally, binds to 23S rRNA. Forms part of two intersubunit bridges in the 70S ribosome. In Wolbachia pipientis subsp. Culex pipiens (strain wPip), this protein is Large ribosomal subunit protein uL14.